A 285-amino-acid chain; its full sequence is HTH-type transcriptional regulator MurR (285 aa).

An HTH rpiR-type domain is found at 1-77 (MLYLTKIRNA…MALIGEYSAS (77 aa)). A DNA-binding region (H-T-H motif) is located at residues 37-56 (SRKMAKQLGISQSSIVKFAQ). In terms of domain architecture, SIS spans 128–268 (IIEVISKAPF…FVGLVQLNDV (141 aa)).

In terms of assembly, homotetramer.

It participates in amino-sugar metabolism; N-acetylmuramate degradation [regulation]. Its function is as follows. Represses the expression of the murPQ operon involved in the uptake and degradation of N-acetylmuramic acid (MurNAc). Binds to two adjacent inverted repeats within the operator region. MurNAc 6-phosphate, the substrate of MurQ, is the specific inducer that weakens binding of MurR to the operator. This is HTH-type transcriptional regulator MurR from Escherichia coli O7:K1 (strain IAI39 / ExPEC).